A 362-amino-acid chain; its full sequence is Uracil-DNA glycosylase (362 aa).

The interval 28 to 97 (ASVAPNDPTE…AGPTEDPNFA (70 aa)) is disordered. The Proton acceptor role is filled by aspartate 205.

The protein belongs to the uracil-DNA glycosylase (UDG) superfamily. UNG family.

It localises to the host nucleus. It carries out the reaction Hydrolyzes single-stranded DNA or mismatched double-stranded DNA and polynucleotides, releasing free uracil.. Excises uracil residues from the DNA which can arise as a result of misincorporation of dUMP residues by DNA polymerase or deamination of cytosines. Therefore may reduce deleterious uracil incorporation into the viral genome, particularly in terminally differentiated cells which lack DNA repair enzymes. This chain is Uracil-DNA glycosylase (UL2), found in Psittacid herpesvirus 1 (isolate Amazon parrot/-/97-0001/1997) (PsHV-1).